Here is a 375-residue protein sequence, read N- to C-terminus: Heat-inducible transcription repressor HrcA (375 aa).

The span at 307 to 318 shows a compositional bias: low complexity; that stretch reads ATDGATHAAASS. The segment at 307–331 is disordered; it reads ATDGATHAAASSQTENQSGDDTRQA.

Belongs to the HrcA family.

Negative regulator of class I heat shock genes (grpE-dnaK-dnaJ and groELS operons). Prevents heat-shock induction of these operons. The polypeptide is Heat-inducible transcription repressor HrcA (Bifidobacterium adolescentis (strain ATCC 15703 / DSM 20083 / NCTC 11814 / E194a)).